The following is a 380-amino-acid chain: Ribosomal RNA small subunit methyltransferase, mitochondrial (380 aa).

Residues 1–26 constitute a mitochondrion transit peptide; that stretch reads MILRLKDQTLIKINSTRSYLSSLVFR. S-adenosyl-L-methionine contacts are provided by His-70, Leu-72, Gly-97, Glu-118, Asp-146, and Asn-161.

It belongs to the class I-like SAM-binding methyltransferase superfamily. rRNA adenine N(6)-methyltransferase family.

It is found in the mitochondrion. It catalyses the reaction adenosine(1914)/adenosine(1915) in 18S rRNA + 4 S-adenosyl-L-methionine = N(6)-dimethyladenosine(1914)/N(6)-dimethyladenosine(1915) in 18S rRNA + 4 S-adenosyl-L-homocysteine + 4 H(+). N6-adenine methyltransferase which modifies the AA dinucleotide at the plant mitochondrial 18S rRNA nucleotides A1914 and A1915. Not active as mitochondrial transcription factor. In Arabidopsis thaliana (Mouse-ear cress), this protein is Ribosomal RNA small subunit methyltransferase, mitochondrial.